A 1203-amino-acid chain; its full sequence is Rho GTPase-activating protein gacGG (1203 aa).

7 RCC1 repeats span residues 52–104 (TGEL…AIME), 106–148 (GLLY…VVAD), 155–204 (KRSV…AIVE), 206–255 (NEVF…ARSG), 257–298 (GNVC…VLSE), 299–359 (KGEI…EGRN), and 361–410 (LSVY…YLRG). Residues 316–343 (KLDVNSSPNINSSSGTTTPTTNTTTTTK) form a disordered region. The segment covering 320–343 (NSSPNINSSSGTTTPTTNTTTTTK) has biased composition (low complexity). Positions 381-594 (VDIAESMRRK…TIMKQYPLME (214 aa)) constitute a Rho-GAP domain. A coiled-coil region spans residues 649–679 (TLEIKNNQNNQNNQKENNNNNNNINNSNNNN). Disordered stretches follow at residues 657–725 (NNQN…TGNI), 746–789 (KDGN…NLSP), and 831–852 (FANSGSSSNNNNSNNSPSLIGS). Low complexity-rich tracts occupy residues 746–788 (KDGN…PNLS) and 833–852 (NSGSSSNNNNSNNSPSLIGS). Residues 995-1078 (FDLLEKSMTE…ISNQNLSRVN (84 aa)) adopt a coiled-coil conformation.

The protein resides in the cytoplasm. In terms of biological role, rho GTPase-activating protein involved in the signal transduction pathway. This is Rho GTPase-activating protein gacGG (gacGG) from Dictyostelium discoideum (Social amoeba).